We begin with the raw amino-acid sequence, 536 residues long: Cytoplasmic dynein 2 intermediate chain 2 (536 aa).

Phosphoserine is present on S15. The DYNLL2 binding stretch occupies residues 80–93 (RNHVDAQVQTEAPV). A DYNLRB1 binding region spans residues 106 to 131 (PRLAAFLRRVEAMVIRELNKNWQSHA). WD repeat units lie at residues 215 to 255 (EVPS…DPLL), 264 to 308 (THTD…QLQL), 390 to 430 (PHGG…PLTS), 433 to 473 (LSLK…QKPT), and 480 to 520 (QDES…TEQG).

This sequence belongs to the dynein light intermediate chain family. As to quaternary structure, the cytoplasmic dynein 2 complex consists of two catalytic heavy chains (HCs) and a number of non-catalytic subunits presented by intermediate chains (ICs), light intermediate chains (LICs) and light chains (LCs). Among them, a heavy chain (DYNC2H1), two intermediate chains (DYNC2I2 and DYNC2I1), a light intermediate chain (DYNC2LI1), and a light chain (DYNLT2B) are unique to the cytoplasmic dynein complex 2, but a subset of the light chains are also shared by dynein-1 and dynein-2 complexes. Interacts with DYNC2I1; their C-terminal domains each bind a copy of the heavy chain, and their extended N-terminal regions are held together by an array of light chain dimers. Interacts with DYNLL2; this interaction is essential for dynein-2-mediated retrograde trafficking of ciliary proteins. Interacts with DYNLRB1; this interaction is essential for dynein-2-mediated retrograde trafficking of ciliary proteins. Interacts (via the WD domains) with MAP3K7 and TAB3. Interacts (via WD domains) with TAB2 (via C-terminus). Interacts (via WD domains) with TRAF6 (via TRAF-type domains). As to expression, expressed in several cell lines (at protein level).

It is found in the cytoplasm. The protein resides in the cytoskeleton. It localises to the cilium basal body. The protein localises to the cilium axoneme. Its subcellular location is the microtubule organizing center. It is found in the centrosome. The protein resides in the cell projection. It localises to the cilium. The protein localises to the filopodium. Functionally, acts as one of several non-catalytic accessory components of the cytoplasmic dynein 2 complex (dynein-2 complex), a motor protein complex that drives the movement of cargos along microtubules within cilia and flagella in concert with the intraflagellar transport (IFT) system. DYNC2I2 plays a major role in retrograde ciliary protein trafficking and in ciliogenesis. Required also to maintain a functional transition zone. In terms of biological role, acts as a negative regulator of the Toll-like and IL-1R receptor signaling pathways. Inhibits the MAP3K7-induced NF-kappa-B activation pathway. Inhibits MAP3K7 phosphorylation at 'Thr-184' and 'Thr-187' upon Il-1 beta stimulation. This Homo sapiens (Human) protein is Cytoplasmic dynein 2 intermediate chain 2.